The chain runs to 632 residues: tRNA uridine 5-carboxymethylaminomethyl modification enzyme MnmG (632 aa).

FAD-binding positions include 15 to 20 (GAGHAG), Ile-127, and Ser-182. NAD(+) is bound at residue 276–290 (GPRYCPSIEDKIVRF). Gln-373 is a binding site for FAD.

The protein belongs to the MnmG family. As to quaternary structure, homodimer. Heterotetramer of two MnmE and two MnmG subunits. The cofactor is FAD.

Its subcellular location is the cytoplasm. NAD-binding protein involved in the addition of a carboxymethylaminomethyl (cmnm) group at the wobble position (U34) of certain tRNAs, forming tRNA-cmnm(5)s(2)U34. The polypeptide is tRNA uridine 5-carboxymethylaminomethyl modification enzyme MnmG (Streptococcus pyogenes serotype M1).